Reading from the N-terminus, the 445-residue chain is MTRKYFGTDGIRGTVGQSPITPDFVLRLAHAVGRVLKKSEARPTVLIGKDTRISGYMLESALESGFNSAGVDVVLLGPLPTPGVAYLTRAQRASLGVVISASHNAYPDNGIKFFSAQGTKLDDAWELAVEAALEEAPVWVDSANLGKARRLNDAPGRYIEFCKSTFANDLTLRGMKLVVDAAHGAAYQVAPNVFHELGAEVSSIGCAPDGLNINKGFGATHPAALVEAVTAQKADYGIALDGDADRLQLVDASGRLFNGDELLYLMVAERIARGDKPAGVVGTLMTNKAIEVALRGQGIELVRAKVGDRYVLEELEKRGWLLGGEGSGHLLALDRHTTGDGIVSALQVLQACVRSGKTVAQLLAEITLFPQVLINVRLTPGQDWKNNDALAGETRRIEAELGDSGRVLIRASGTEPLVRVMVEARDAKQAQSCAQRLAATLEPAR.

Ser102 (phosphoserine intermediate) is an active-site residue. Mg(2+)-binding residues include Ser102, Asp241, Asp243, and Asp245. Phosphoserine is present on Ser102.

It belongs to the phosphohexose mutase family. Mg(2+) serves as cofactor. Post-translationally, activated by phosphorylation.

The catalysed reaction is alpha-D-glucosamine 1-phosphate = D-glucosamine 6-phosphate. In terms of biological role, catalyzes the conversion of glucosamine-6-phosphate to glucosamine-1-phosphate. The polypeptide is Phosphoglucosamine mutase (Variovorax paradoxus (strain S110)).